A 560-amino-acid chain; its full sequence is Protein DETOXIFICATION 45, chloroplastic (560 aa).

A chloroplast-targeting transit peptide spans 1–75 (MESSRVVVGG…QTNPDCGVVK (75 aa)). Helical transmembrane passes span 109–129 (LVMLSLPAIAGQAIDPLTLLM), 147–167 (VSMAIFNTISKLFNIPLLSVA), 209–229 (ALVLAIGIGIFEALALSLASG), 250–270 (FLVLRALGAPAYVVSLALQGI), 280–300 (PVYCLGIGNFLAVFLFPLFIY), 308–328 (GAAISSVISQYTVAILMLILL), 353–373 (FVLGRTLSVLVTMTVATSMAA), 389–411 (VWLAVSLLTDALASSGQALIASS), 426–446 (FVLKIGVVTGIALAIVLGMSF), 466–486 (GVLFVAATQPITALAFIFDGL), 495–515 (YAACSMMVVGGISSAFMLYAP), and 523–543 (VWVGLSMFMGLRMVAGFSRLM).

The protein belongs to the multi antimicrobial extrusion (MATE) (TC 2.A.66.1) family. In terms of tissue distribution, ubiquitous.

It is found in the plastid. The protein localises to the chloroplast membrane. The protein is Protein DETOXIFICATION 45, chloroplastic of Arabidopsis thaliana (Mouse-ear cress).